Reading from the N-terminus, the 191-residue chain is tRNA-specific adenosine deaminase 2 (191 aa).

Positions 20-145 constitute a CMP/dCMP-type deaminase domain; that stretch reads EETEKWMEQA…SVLDIASADL (126 aa). Residue His-71 coordinates Zn(2+). Glu-73 serves as the catalytic Proton donor. Residues Cys-107 and Cys-110 each coordinate Zn(2+).

Belongs to the cytidine and deoxycytidylate deaminase family. ADAT2 subfamily. Zn(2+) serves as cofactor.

It catalyses the reaction adenosine(34) in tRNA + H2O + H(+) = inosine(34) in tRNA + NH4(+). Functionally, probably participates in deamination of adenosine-34 to inosine in many tRNAs. The polypeptide is tRNA-specific adenosine deaminase 2 (DEADC1) (Bos taurus (Bovine)).